A 520-amino-acid chain; its full sequence is Alpha-1B adrenergic receptor (520 aa).

Residues 1–45 (MNPDLDTGHNTSAPAHWGELKNANFTGPNQTSSNSTLPQLDITRA) lie on the Extracellular side of the membrane. N-linked (GlcNAc...) asparagine glycans are attached at residues N10, N24, N29, and N34. The helical transmembrane segment at 46–70 (ISVGLVLGAFILFAIVGNILVILSV) threads the bilayer. At 71–83 (ACNRHLRTPTNYF) the chain is on the cytoplasmic side. A helical membrane pass occupies residues 84 to 105 (IVNLAMADLLLSFTVLPFSAAL). Residues 106 to 115 (EVLGYWVLGR) are Extracellular-facing. Residues 116–141 (IFCDIWAAVDVLCCTASILSLCAISI) form a helical membrane-spanning segment. C118 and C195 form a disulfide bridge. Over 142–161 (DRYIGVRYSLQYPTLVTRRK) the chain is Cytoplasmic. Residues 162-184 (AILALLSVWVLSTVISIGPLLGW) form a helical membrane-spanning segment. The Extracellular segment spans residues 185 to 201 (KEPAPNDDKECGVTEEP). A helical membrane pass occupies residues 202–224 (FYALFSSLGSFYIPLAVILVMYC). Topologically, residues 225–295 (RVYIVAKRTT…FSREKKAAKT (71 aa)) are cytoplasmic. The residue at position 264 (T264) is a Phosphothreonine. A helical transmembrane segment spans residues 296–319 (LGIVVGMFILCWLPFFIALPLGSL). Topologically, residues 320–326 (FSTLKPP) are extracellular. The helical transmembrane segment at 327 to 351 (DAVFKVVFWLGYFNSCLNPIIYPCS) threads the bilayer. The Cytoplasmic portion of the chain corresponds to 352–520 (SKEFKRAFVR…SNMPLAPGQF (169 aa)). C365 carries S-palmitoyl cysteine lipidation. A Nuclear localization signal motif is present at residues 368-380 (RGRGRRRRRRRRR). 2 disordered regions span residues 394–432 (GGSLERSQSRKDSLDDSGSCLSGSQRTLPSASPSPGYLG) and 479–520 (LTEP…PGQF).

This sequence belongs to the G-protein coupled receptor 1 family. Adrenergic receptor subfamily. ADRA1B sub-subfamily. In terms of assembly, homo- and heterooligomer. Heterooligomerizes with ADRA1B homooligomers in cardiac myocytes. Interacts with CAVIN4.

It localises to the nucleus membrane. It is found in the cell membrane. The protein localises to the cytoplasm. The protein resides in the membrane. Its subcellular location is the caveola. Functionally, this alpha-adrenergic receptor mediates its action by association with G proteins that activate a phosphatidylinositol-calcium second messenger system. Its effect is mediated by G(q) and G(11) proteins. Nuclear ADRA1A-ADRA1B heterooligomers regulate phenylephrine (PE)-stimulated ERK signaling in cardiac myocytes. The polypeptide is Alpha-1B adrenergic receptor (ADRA1B) (Homo sapiens (Human)).